The sequence spans 141 residues: Putative pre-16S rRNA nuclease (141 aa).

This sequence belongs to the YqgF nuclease family.

It is found in the cytoplasm. In terms of biological role, could be a nuclease involved in processing of the 5'-end of pre-16S rRNA. In Amoebophilus asiaticus (strain 5a2), this protein is Putative pre-16S rRNA nuclease.